The sequence spans 656 residues: Choline transporter-like protein 1 (656 aa).

Gly2 carries the N-myristoyl glycine lipid modification. Residues Gly2–Pro29 lie on the Cytoplasmic side of the membrane. A helical transmembrane segment spans residues Trp30–Ala50. Over Thr51–Lys211 the chain is Extracellular. Asn134 and Asn179 each carry an N-linked (GlcNAc...) asparagine glycan. Residues Glu212–Ile232 traverse the membrane as a helical segment. The Cytoplasmic segment spans residues Arg233–Arg237. A helical transmembrane segment spans residues Val238–Leu258. At Trp259–Ala287 the chain is on the extracellular side. A helical membrane pass occupies residues Leu288–Val308. At Met309 to Ala314 the chain is on the cytoplasmic side. A helical transmembrane segment spans residues Leu315–Phe335. The Extracellular portion of the chain corresponds to Gln336–Pro337. The helical transmembrane segment at Phe338–Leu358 threads the bilayer. Topologically, residues Gly359–Pro379 are cytoplasmic. The chain crosses the membrane as a helical span at residues Leu380–Ala400. Topologically, residues Cys401–Thr441 are extracellular. The chain crosses the membrane as a helical span at residues Val442–Ile462. Topologically, residues His463–Asp536 are cytoplasmic. A helical membrane pass occupies residues Phe537 to Leu557. At Leu558–Thr565 the chain is on the extracellular side. A helical transmembrane segment spans residues Val566–Leu586. Over Ser587–Ala656 the chain is Cytoplasmic. A disordered region spans residues Ala635 to Ala656. Ser651 is modified (phosphoserine).

Belongs to the CTL (choline transporter-like) family. Expressed in neurons, oligodendrocytes and astrocytes. Also expressed in the mucosal cell layer of the colon. In the developing brain, isoform 1 is expressed in both neurons and oligodendroglial cells, whereas isoform 2 is restricted to oligodendroglial cells.

It localises to the cell membrane. It is found in the mitochondrion outer membrane. The enzyme catalyses choline(out) + n H(+)(in) = choline(in) + n H(+)(out). The catalysed reaction is ethanolamine(out) + n H(+)(in) = ethanolamine(in) + n H(+)(out). In terms of biological role, choline transporter, acts as a choline/H+ antiporter. Also acts as a high-affinity ethanolamine/H+ antiporter, regulating the supply of extracellular ethanolamine (Etn) for the CDP-Etn pathway, redistribute intracellular Etn and balance the CDP-Cho and CDP-Etn arms of the Kennedy pathway. Involved in membrane synthesis and myelin production. In Rattus norvegicus (Rat), this protein is Choline transporter-like protein 1 (Slc44a1).